A 347-amino-acid polypeptide reads, in one-letter code: Protein YIPF3 (347 aa).

The interval 1 to 28 (MATQAAPASGVRNGAGPEWGGFEENIQG) is disordered. Ala2 carries the N-acetylalanine modification. Residues 2–145 (ATQAAPASGV…PIKMVNFPQK (144 aa)) are Cytoplasmic-facing. A helical membrane pass occupies residues 146–166 (VAGELYGPLMLVFTLVAILLH). Topologically, residues 167 to 184 (GMKTSDTIIREGTLMGTA) are lumenal. A helical membrane pass occupies residues 185–205 (IGTCFGYWLGVSSFIYFLAYL). At 206–211 (CNAQIT) the chain is on the cytoplasmic side. Residues 212-234 (MLQMLALLGYGLFGHCIVLFITY) form a helical membrane-spanning segment. Over 235 to 237 (NIH) the chain is Lumenal. The chain crosses the membrane as a helical span at residues 238-260 (LHALFYLFWLLLGGLSTLRMVAV). At 261 to 271 (LVSRTVGPTQR) the chain is on the cytoplasmic side. Residues 272–292 (LLLCGTLAALHMLFLLYLHFA) form a helical membrane-spanning segment. The Lumenal portion of the chain corresponds to 293 to 347 (YHKVVEGILDTLEGPNIPPMQRVPRDIPAVLPAAKLPVAVVNATAKAIAVTLQSH). Asn334 carries an N-linked (GlcNAc...) asparagine glycan.

The protein belongs to the YIP1 family. In terms of assembly, interacts with YIPF4 and YIPF5.

The protein resides in the cell membrane. It localises to the golgi apparatus. The protein localises to the cis-Golgi network membrane. It is found in the cytoplasm. Involved in the maintenance of the Golgi structure. May play a role in hematopoiesis. This is Protein YIPF3 (Yipf3) from Rattus norvegicus (Rat).